Reading from the N-terminus, the 76-residue chain is Nemertide alpha-1 (76 aa).

Residues 1–28 (YRIASSSIAKMKTAVFLVGLLFLGLVFA) form the signal peptide. A propeptide spanning residues 29–44 (DEAAIDSEFDQSIDKR) is cleaved from the precursor. Intrachain disulfides connect Cys46-Cys60, Cys53-Cys64, and Cys59-Cys70. Residues Pro72 and Pro73 each carry the 4-hydroxyproline modification.

This sequence belongs to the nemertide family. In terms of tissue distribution, confined to the epidermis and to the mucus layer.

It localises to the secreted. Functionally, highly potent toxin against insect sodium channel (Nav) and with less potent activity against mammalian sodium channels. Potently inhibits inactivation of insect sodium channels of B.germanica (BgNav1) (EC(50)=8.6 nM), D.melanogaster (Dm Nav1), and arachnid sodium channel V.destructor (VdNav1). Also delays the inactivation of most mammalian Nav channels tested (human Nav1.1/SCN1A; EC(50)=124.1 nM, rat Nav1.2/SCN2A; EC(50)=359.6 nM, rat Nav1.3/SCN3A; EC(50)=135.4 nM, rat Nav1.4/SCN4A; EC(50)=145.5 nM, human Nav1.5/SCN5A; EC(50)=138.3 nM, mouse Nav1.6/SCN8A; EC(50)=240.4 nM, human Nav1.9/SCN9A; EC(50)=76.5 nM). 1 uM is enough to completely inhibits the inactivation, resulting in sustained non-inactivating currents. In addition, the toxin significantly enhances the recovery from inactivation, and the open state is not required for the toxin to interact with the channel. In vivo, injection into green crabs (Carcinus maenas at 1 mug/kg) of small doses (1-5 ug/kg) results in slow and fast permanent paralysis, whereas injection of high doses (more than 10 ug/kg) causes death. Injection into juvenile Blaptica dubia cockroaches results in death or permanent paralysis at doses higher than 7.1 ug/kg. Injection into brine shrimp (Artemia salina) stops movement or causes death after 24 hours (EC(50)=0.3 uM). In the rare inherited cardiac arrhythmia Brugada syndrome 1 (BRGDA1), this toxin is able to restore the loss of function by reducing channel inactivation, without affecting activation, by binding to Nav1.5/SCN5A. This Lineus lacteus (Ribbon worm) protein is Nemertide alpha-1.